The following is a 187-amino-acid chain: Elongation factor P (187 aa).

This sequence belongs to the elongation factor P family.

Its subcellular location is the cytoplasm. It participates in protein biosynthesis; polypeptide chain elongation. In terms of biological role, involved in peptide bond synthesis. Stimulates efficient translation and peptide-bond synthesis on native or reconstituted 70S ribosomes in vitro. Probably functions indirectly by altering the affinity of the ribosome for aminoacyl-tRNA, thus increasing their reactivity as acceptors for peptidyl transferase. The sequence is that of Elongation factor P from Synechococcus sp. (strain CC9311).